The chain runs to 270 residues: MLDIIILVVIGGAFGAMTREFIMLMVPPLTDGFPLDILVANVVACFLLGTVTALYARKIHSRDVHTIIGTGMMGGVSTFSSFAYGSVVLASASVSAFLIAAAYVTVSVVAGYVAVLAGMKFGEKSADILHRYPPMASIIDSGLVTVESRHSVAETIERVAAKAKSMGMNVFTRVDHGAGAKEAGLGLPPTELIIFGNPQNGTVLMQDKRTIGLDLPIRALAWEDGSGKVWLTVNDPAWLAQRHSLGLSSDVAIKAMVTGTGTVTKYAAGD.

4 helical membrane passes run 4 to 24 (IIIL…FIML), 35 to 55 (LDIL…TALY), 67 to 87 (IIGT…YGSV), and 96 to 116 (AFLI…VAVL). Gly-74 and Ser-77 together coordinate Na(+).

Belongs to the fluoride channel Fluc/FEX (TC 1.A.43) family.

The protein resides in the cell inner membrane. It carries out the reaction fluoride(in) = fluoride(out). Na(+) is not transported, but it plays an essential structural role and its presence is essential for fluoride channel function. In terms of biological role, fluoride-specific ion channel. Important for reducing fluoride concentration in the cell, thus reducing its toxicity. The protein is Fluoride-specific ion channel FluC 2 of Brucella melitensis biotype 1 (strain ATCC 23456 / CCUG 17765 / NCTC 10094 / 16M).